Consider the following 102-residue polypeptide: NADH-quinone oxidoreductase subunit K 1 (102 aa).

Helical transmembrane passes span 5–25, 31–51, and 65–85; these read LSHY…GIFL, IVIL…MVAF, and LFIL…LVVF.

This sequence belongs to the complex I subunit 4L family. NDH-1 is composed of 14 different subunits. Subunits NuoA, H, J, K, L, M, N constitute the membrane sector of the complex.

The protein localises to the cell inner membrane. The catalysed reaction is a quinone + NADH + 5 H(+)(in) = a quinol + NAD(+) + 4 H(+)(out). In terms of biological role, NDH-1 shuttles electrons from NADH, via FMN and iron-sulfur (Fe-S) centers, to quinones in the respiratory chain. The immediate electron acceptor for the enzyme in this species is believed to be ubiquinone. Couples the redox reaction to proton translocation (for every two electrons transferred, four hydrogen ions are translocated across the cytoplasmic membrane), and thus conserves the redox energy in a proton gradient. The chain is NADH-quinone oxidoreductase subunit K 1 from Rhizobium etli (strain ATCC 51251 / DSM 11541 / JCM 21823 / NBRC 15573 / CFN 42).